Consider the following 396-residue polypeptide: MANLPPVYIVSTARTPIGSFLGSLSSQTAVQLGSVAIKGAVERAGIKPEDVDEVFFGNVLSAGVGQGPARQCALGAGLPQTVIATTVNKVCASSLKAIILGAQNIMLGTSDIVVAGGTESMSNTPHYLPNLRNGAKYGDQTLVDGVLKDGLTDSFKKDHMGISAELCVDDHDLTREAQDEYAINSYKKAQAATEAGLFTEIVPVEIPGGRGKPAIKVERDDEVKNLNVDKLKAMRPAFKPDGTVTAPNAAPINDGAAAVVLVSEAKLKELNLKPVAKILGWGDAEREPERFTIAPALAIPKAIKHAGLTAEQVEYYEINEAFSAVALANMKILGLNPDQVNVYGGSVAIGHPLGCSGARIVTTLTSVLKERKAKIGAVGICNGGGGASAMVIENLQ.

Residue Cys-91 is the Acyl-thioester intermediate of the active site. Tyr-186 contributes to the K(+) binding site. Asn-227 and Lys-230 together coordinate CoA. K(+)-binding residues include Ala-246, Pro-247, and Val-347. Residues His-351 and Cys-381 each act as proton acceptor in the active site. Asn-382 lines the chloride pocket.

It belongs to the thiolase-like superfamily. Thiolase family. Homotetramer. Requires K(+) as cofactor.

It localises to the cytoplasm. The protein resides in the cytosol. The enzyme catalyses 2 acetyl-CoA = acetoacetyl-CoA + CoA. Its pathway is metabolic intermediate biosynthesis; (R)-mevalonate biosynthesis; (R)-mevalonate from acetyl-CoA: step 1/3. In terms of biological role, acetyl-CoA acetyltransferase; part of the first module of ergosterol biosynthesis pathway that includes the early steps of the pathway, conserved across all eukaryotes, and which results in the formation of mevalonate from acetyl-coenzyme A (acetyl-CoA). ERG10B catalyzes the formation of acetoacetyl-CoA from acetyl-CoA. The first module starts with the action of the cytosolic acetyl-CoA acetyltransferase ERG10B that catalyzes the formation of acetoacetyl-CoA. The hydroxymethylglutaryl-CoA synthases ERG13 then condenses acetyl-CoA with acetoacetyl-CoA to form HMG-CoA. The rate-limiting step of the early module is the reduction to mevalonate by the 3-hydroxy-3-methylglutaryl-coenzyme A (HMG-CoA) reductases HMG1. This is Acetyl-CoA acetyltransferase ERG10, cytosolic from Gibberella zeae (strain ATCC MYA-4620 / CBS 123657 / FGSC 9075 / NRRL 31084 / PH-1) (Wheat head blight fungus).